The following is a 193-amino-acid chain: Thymidine kinase (193 aa).

Position 9–16 (9–16 (AAMNAGKS)) interacts with ATP.

This sequence belongs to the thymidine kinase family.

It carries out the reaction thymidine + ATP = dTMP + ADP + H(+). This thymidine kinase is one of the enzymes that catalyze DNA precursor synthesis. Although tk is a nonessential gene, some strains of host E.coli do not support the growth of phages that lack this gene. This is Thymidine kinase (TK) from Escherichia coli (Bacteriophage T4).